The primary structure comprises 164 residues: 3-dehydroquinate dehydratase (164 aa).

The Proton acceptor role is filled by Y22. The substrate site is built by N73, H79, and D86. H99 functions as the Proton donor in the catalytic mechanism. Substrate is bound by residues 100 to 101 and R110; that span reads IS.

It belongs to the type-II 3-dehydroquinase family. In terms of assembly, homododecamer.

The catalysed reaction is 3-dehydroquinate = 3-dehydroshikimate + H2O. It functions in the pathway metabolic intermediate biosynthesis; chorismate biosynthesis; chorismate from D-erythrose 4-phosphate and phosphoenolpyruvate: step 3/7. Catalyzes a trans-dehydration via an enolate intermediate. In Aliarcobacter butzleri (strain RM4018) (Arcobacter butzleri), this protein is 3-dehydroquinate dehydratase.